A 424-amino-acid chain; its full sequence is Tol-Pal system protein TolB (424 aa).

Residues 1-16 form the signal peptide; sequence MKQLLVLILSLYTTLA.

Belongs to the TolB family. As to quaternary structure, the Tol-Pal system is composed of five core proteins: the inner membrane proteins TolA, TolQ and TolR, the periplasmic protein TolB and the outer membrane protein Pal. They form a network linking the inner and outer membranes and the peptidoglycan layer.

The protein localises to the periplasm. Its function is as follows. Part of the Tol-Pal system, which plays a role in outer membrane invagination during cell division and is important for maintaining outer membrane integrity. The sequence is that of Tol-Pal system protein TolB from Ruthia magnifica subsp. Calyptogena magnifica.